We begin with the raw amino-acid sequence, 149 residues long: Transcriptional repressor NrdR (149 aa).

A zinc finger spans residues 3–34 (CPFCSENDTKVIDSRLVADGHQVRRRRQCLAC). The 91-residue stretch at 49-139 (PKVIKSNGNR…VYRSFEDIRE (91 aa)) folds into the ATP-cone domain.

This sequence belongs to the NrdR family. The cofactor is Zn(2+).

Functionally, negatively regulates transcription of bacterial ribonucleotide reductase nrd genes and operons by binding to NrdR-boxes. This chain is Transcriptional repressor NrdR, found in Vibrio atlanticus (strain LGP32) (Vibrio splendidus (strain Mel32)).